A 147-amino-acid polypeptide reads, in one-letter code: Cilia- and flagella-associated protein 90 (147 aa).

Residues M1–L36 are disordered.

Microtubule inner protein component of sperm flagellar doublet microtubules.

Its subcellular location is the cytoplasm. The protein resides in the cytoskeleton. It is found in the cilium axoneme. It localises to the flagellum axoneme. Its function is as follows. Microtubule inner protein (MIP) part of the dynein-decorated doublet microtubules (DMTs) in cilia axoneme, which is required for motile cilia beating. In Homo sapiens (Human), this protein is Cilia- and flagella-associated protein 90.